The following is a 154-amino-acid chain: uncharacterized protein (154 aa).

4 helical membrane passes run 20 to 42 (FRLF…GQFG), 62 to 84 (FFGY…AVLL), 91 to 109 (ALGA…LINY), and 113 to 132 (IGVQ…LLWM).

Its subcellular location is the cell membrane. This is an uncharacterized protein from Bacillus subtilis (strain 168).